The chain runs to 436 residues: Trigger factor (436 aa).

The PPIase FKBP-type domain maps to 161–248 (TDRVTIDLYG…LKKVEQYRLP (88 aa)).

The protein belongs to the FKBP-type PPIase family. Tig subfamily.

The protein localises to the cytoplasm. It carries out the reaction [protein]-peptidylproline (omega=180) = [protein]-peptidylproline (omega=0). Involved in protein export. Acts as a chaperone by maintaining the newly synthesized protein in an open conformation. Functions as a peptidyl-prolyl cis-trans isomerase. The sequence is that of Trigger factor from Baumannia cicadellinicola subsp. Homalodisca coagulata.